A 131-amino-acid polypeptide reads, in one-letter code: Large ribosomal subunit protein eL32 (131 aa).

Residues 39-77 (LGEKWRRPKGRHSKMRRKLKSKPKMPNPGYGSPKKVRGL) form a disordered region. Residues 44–61 (RRPKGRHSKMRRKLKSKP) are compositionally biased toward basic residues.

It belongs to the eukaryotic ribosomal protein eL32 family.

This chain is Large ribosomal subunit protein eL32 (rpl32), found in Methanopyrus kandleri (strain AV19 / DSM 6324 / JCM 9639 / NBRC 100938).